Reading from the N-terminus, the 518-residue chain is Serine--tRNA ligase, mitochondrial (518 aa).

Residues 1-34 constitute a mitochondrion transit peptide; sequence MAASMARLWWPFLARQGLRSRGRCVCSQNPRRSF. At lysine 110 the chain carries N6-acetyllysine. Lysine 195 carries the post-translational modification N6-succinyllysine. Residue 299–301 coordinates L-serine; the sequence is TAE. Residue 330-332 participates in ATP binding; that stretch reads RAE. At lysine 337 the chain carries N6-succinyllysine. Valine 345 serves as a coordination point for ATP. Glutamate 352 lines the L-serine pocket. 418–421 serves as a coordination point for ATP; that stretch reads EVTS. L-serine is bound at residue threonine 453. A disordered region spans residues 497-518; sequence PLQYIGPNQPQKPRLPGQSATR.

This sequence belongs to the class-II aminoacyl-tRNA synthetase family. Type-1 seryl-tRNA synthetase subfamily. As to quaternary structure, homodimer. The tRNA molecule probably binds across the dimer. Ubiquitous.

The protein resides in the mitochondrion matrix. It catalyses the reaction tRNA(Ser) + L-serine + ATP = L-seryl-tRNA(Ser) + AMP + diphosphate + H(+). The enzyme catalyses tRNA(Sec) + L-serine + ATP = L-seryl-tRNA(Sec) + AMP + diphosphate + H(+). It functions in the pathway aminoacyl-tRNA biosynthesis; selenocysteinyl-tRNA(Sec) biosynthesis; L-seryl-tRNA(Sec) from L-serine and tRNA(Sec): step 1/1. Its function is as follows. Catalyzes the attachment of serine to tRNA(Ser). Is also probably able to aminoacylate tRNA(Sec) with serine, to form the misacylated tRNA L-seryl-tRNA(Sec), which will be further converted into selenocysteinyl-tRNA(Sec). The chain is Serine--tRNA ligase, mitochondrial (Sars2) from Mus musculus (Mouse).